The chain runs to 142 residues: Large ribosomal subunit protein uL13 (142 aa).

Belongs to the universal ribosomal protein uL13 family. Part of the 50S ribosomal subunit.

Its function is as follows. This protein is one of the early assembly proteins of the 50S ribosomal subunit, although it is not seen to bind rRNA by itself. It is important during the early stages of 50S assembly. This chain is Large ribosomal subunit protein uL13, found in Histophilus somni (Haemophilus somnus).